The primary structure comprises 327 residues: Glycerol-3-phosphate dehydrogenase [NAD(P)+] (327 aa).

NADPH contacts are provided by phenylalanine 13, arginine 34, and lysine 107. Sn-glycerol 3-phosphate is bound by residues lysine 107 and glycine 135. An NADPH-binding site is contributed by alanine 139. Sn-glycerol 3-phosphate contacts are provided by lysine 190, aspartate 243, serine 253, arginine 254, and asparagine 255. Lysine 190 functions as the Proton acceptor in the catalytic mechanism. NADPH is bound at residue arginine 254. Residues valine 276 and glutamate 277 each contribute to the NADPH site.

It belongs to the NAD-dependent glycerol-3-phosphate dehydrogenase family.

It is found in the cytoplasm. It catalyses the reaction sn-glycerol 3-phosphate + NAD(+) = dihydroxyacetone phosphate + NADH + H(+). It carries out the reaction sn-glycerol 3-phosphate + NADP(+) = dihydroxyacetone phosphate + NADPH + H(+). Its pathway is membrane lipid metabolism; glycerophospholipid metabolism. Its function is as follows. Catalyzes the reduction of the glycolytic intermediate dihydroxyacetone phosphate (DHAP) to sn-glycerol 3-phosphate (G3P), the key precursor for phospholipid synthesis. This chain is Glycerol-3-phosphate dehydrogenase [NAD(P)+], found in Rhizobium johnstonii (strain DSM 114642 / LMG 32736 / 3841) (Rhizobium leguminosarum bv. viciae).